Consider the following 421-residue polypeptide: Probable UDP-arabinose 4-epimerase 1 (421 aa).

Topologically, residues 1 to 33 (MLPTNRNRPQQRPARSWYFISDMDFSDPKRKPR) are cytoplasmic. A helical; Signal-anchor for type II membrane protein membrane pass occupies residues 34–53 (YLSKILMVALLTAMCVVMLT). Over 54-421 (QPPCHRRTPS…GYGPPQAMVL (368 aa)) the chain is Lumenal. NAD(+) is bound at residue 74-105 (HVLVTGGAGYIGSHAALRLLKDSFRVTIVDNL). The active-site Proton acceptor is the tyrosine 222.

The protein belongs to the NAD(P)-dependent epimerase/dehydratase family. NAD(+) serves as cofactor.

It localises to the golgi apparatus. It is found in the golgi stack membrane. It carries out the reaction UDP-beta-L-arabinopyranose = UDP-alpha-D-xylose. It participates in nucleotide-sugar biosynthesis; UDP-L-arabinose biosynthesis; UDP-L-arabinose from UDP-alpha-D-xylose: step 1/1. It functions in the pathway cell wall biogenesis; cell wall polysaccharide biosynthesis. The sequence is that of Probable UDP-arabinose 4-epimerase 1 (UEL-1) from Oryza sativa subsp. japonica (Rice).